Reading from the N-terminus, the 420-residue chain is Zinc finger and BTB domain-containing protein 42 (420 aa).

A BTB domain is found at 24-92 (CDCTVLVGDA…MYEGRLDLHS (69 aa)). Disordered stretches follow at residues 174 to 204 (PPSWQVSEESSGALDLSLKPGPRPEQAHPPC) and 216 to 248 (QGAQPLVKAEQDSFSEQDSSSPQSADRSPPPVC). Positions 227–241 (DSFSEQDSSSPQSAD) are enriched in low complexity. 4 C2H2-type zinc fingers span residues 292–314 (CICPLCCKLFPSTHALQPHLSAH), 332–354 (PTCPLCSKTFSCTYTLKRHERTH), 360–382 (YTCVQCGKSFQYSHNLSRHAVVH), and 388–411 (HACRWCERRFTQSGDLYRHVRKFH).

Belongs to the krueppel C2H2-type zinc-finger protein family. ZBTB18 subfamily.

It is found in the cytoplasm. It localises to the nucleus. The protein localises to the nucleoplasm. In terms of biological role, transcriptional repressor. Specifically binds DNA and probably acts by recruiting chromatin remodeling multiprotein complexes. The sequence is that of Zinc finger and BTB domain-containing protein 42 (Zbtb42) from Rattus norvegicus (Rat).